The sequence spans 375 residues: Methylthioribose-1-phosphate isomerase (375 aa).

Asp-257 functions as the Proton donor in the catalytic mechanism.

Belongs to the eIF-2B alpha/beta/delta subunits family. MtnA subfamily.

Its subcellular location is the cytoplasm. The protein resides in the nucleus. The enzyme catalyses 5-(methylsulfanyl)-alpha-D-ribose 1-phosphate = 5-(methylsulfanyl)-D-ribulose 1-phosphate. Its pathway is amino-acid biosynthesis; L-methionine biosynthesis via salvage pathway; L-methionine from S-methyl-5-thio-alpha-D-ribose 1-phosphate: step 1/6. Functionally, catalyzes the interconversion of methylthioribose-1-phosphate (MTR-1-P) into methylthioribulose-1-phosphate (MTRu-1-P). The polypeptide is Methylthioribose-1-phosphate isomerase (Leishmania major).